A 392-amino-acid polypeptide reads, in one-letter code: Bone morphogenetic protein 15 (392 aa).

Positions 1 to 18 (MVLLSILRILFLCELVLF) are cleaved as a signal peptide. The propeptide occupies 19–267 (MEHRAQMAEG…ERESLLRRTR (249 aa)). N87, N147, and N237 each carry an N-linked (GlcNAc...) asparagine glycan. Q268 bears the Pyrrolidone carboxylic acid; in P16 and P17 mark. Residue S273 is modified to Phosphoserine; in P16. O-linked (HexNAc...) threonine; in P17 glycosylation occurs at T277. 3 cysteine pairs are disulfide-bonded: C291–C357, C320–C389, and C324–C391. N-linked (GlcNAc...) asparagine glycosylation occurs at N373.

Belongs to the TGF-beta family. As to quaternary structure, homodimer. But, in contrast to other members of this family, cannot be disulfide-linked.

The protein resides in the secreted. Functionally, may be involved in follicular development. Oocyte-specific growth/differentiation factor that stimulates folliculogenesis and granulosa cell (GC) growth. The chain is Bone morphogenetic protein 15 (BMP15) from Homo sapiens (Human).